The primary structure comprises 311 residues: MPDIACQPHQDPQGKLNWVGMSGIELPIKIEQDSQTLTLSSQVQAYVSLDDPLSKGIHMSRLYLILDEMGSNAPLNPASIQTLLTAFIESHQGLSQNAFVEFRFDYYERRRSLKSDNSGWKHYPCTLRGEMRNGQFECEISISVPYSSTCPCSAALSRQLIQEAFEQQFNGQDLDYNQVLEWLGTPEGICATPHSQRSYAQVKLKVNAEHPLNLSNVINQIEDAVKTPVQSTVKREDEQEFARLNATNLMFCEDAARRLQAKLESCPEYKDYWVRVNHLESLHPHDAVAIVTKNVPGGYSDEPNFMERFQN.

Belongs to the GTP cyclohydrolase IV family.

It catalyses the reaction GTP + H2O = 7,8-dihydroneopterin 3'-triphosphate + formate + H(+). It participates in cofactor biosynthesis; 7,8-dihydroneopterin triphosphate biosynthesis; 7,8-dihydroneopterin triphosphate from GTP: step 1/1. Functionally, converts GTP to 7,8-dihydroneopterin triphosphate. The polypeptide is GTP cyclohydrolase FolE2 (Hydrogenovibrio crunogenus (strain DSM 25203 / XCL-2) (Thiomicrospira crunogena)).